Reading from the N-terminus, the 431-residue chain is WD repeat-containing protein 18 (431 aa).

WD repeat units lie at residues 78 to 118 (VCPG…AILS), 119 to 158 (RHFQ…QLDS), 170 to 211 (RHSL…MLLS), 213 to 252 (LFDV…LSRD), and 267 to 306 (GHRN…CIWT). Positions 342–363 (HLNPSEQGDGTGTGGMSLRLGA) are disordered.

It belongs to the WD repeat IPI3/WDR18 family. Component of the PELP1 complex, composed of at least PELP1, TEX10 and WDR18. The complex interacts with pre-60S ribosome particles.

It is found in the nucleus. It localises to the nucleolus. The protein resides in the nucleoplasm. Its subcellular location is the dynein axonemal particle. Functionally, involved in left-right determination through controlling the correct clustering and migration of dorsal forerunner cells (DFCs) and Kupffer's vesicle formation. Component of the PELP1 complex involved in the nucleolar steps of 28S rRNA maturation and the subsequent nucleoplasmic transit of the pre-60S ribosomal subunit. The polypeptide is WD repeat-containing protein 18 (wdr18) (Danio rerio (Zebrafish)).